The following is a 269-amino-acid chain: Eukaryotic translation initiation factor 3 subunit G-1 (269 aa).

Residues 188-266 (AAIRISNLSE…LILSVEWSKP (79 aa)) enclose the RRM domain.

The protein belongs to the eIF-3 subunit G family. In terms of assembly, component of the eukaryotic translation initiation factor 3 (eIF-3) complex. The eIF-3 complex interacts with pix.

The protein resides in the cytoplasm. In terms of biological role, RNA-binding component of the eukaryotic translation initiation factor 3 (eIF-3) complex, which is involved in protein synthesis of a specialized repertoire of mRNAs and, together with other initiation factors, stimulates binding of mRNA and methionyl-tRNAi to the 40S ribosome. The eIF-3 complex specifically targets and initiates translation of a subset of mRNAs involved in cell proliferation. This subunit can bind 18S rRNA. The chain is Eukaryotic translation initiation factor 3 subunit G-1 from Drosophila sechellia (Fruit fly).